A 491-amino-acid polypeptide reads, in one-letter code: Glutamyl-tRNA(Gln) amidotransferase subunit A (491 aa).

Ser-158 serves as the catalytic Charge relay system. Residue Ser-182 is the Acyl-ester intermediate of the active site.

Belongs to the amidase family. GatA subfamily. As to quaternary structure, heterotrimer of A, B and C subunits.

The enzyme catalyses L-glutamyl-tRNA(Gln) + L-glutamine + ATP + H2O = L-glutaminyl-tRNA(Gln) + L-glutamate + ADP + phosphate + H(+). Functionally, allows the formation of correctly charged Gln-tRNA(Gln) through the transamidation of misacylated Glu-tRNA(Gln) in organisms which lack glutaminyl-tRNA synthetase. The reaction takes place in the presence of glutamine and ATP through an activated gamma-phospho-Glu-tRNA(Gln). This is Glutamyl-tRNA(Gln) amidotransferase subunit A from Bradyrhizobium diazoefficiens (strain JCM 10833 / BCRC 13528 / IAM 13628 / NBRC 14792 / USDA 110).